The sequence spans 1074 residues: Insulin receptor substrate 2-A (1074 aa).

Residues methionine 1–valine 64 are disordered. 2 short sequence motifs (YXXM motif) span residues tyrosine 33–methionine 36 and tyrosine 145–methionine 148. In terms of domain architecture, PH spans aspartate 63–asparagine 168. The IRS-type PTB domain occupies phenylalanine 193–serine 297. Disordered stretches follow at residues proline 326–arginine 370, cysteine 426–tyrosine 461, and serine 475–aspartate 510. Polar residues predominate over residues serine 347–glycine 361. Composition is skewed to low complexity over residues cysteine 426 to serine 435 and serine 442 to glycine 454. The segment covering serine 475–glutamine 504 has biased composition (polar residues). 6 short sequence motifs (YXXM motif) span residues tyrosine 496–methionine 499, tyrosine 592–methionine 595, tyrosine 605–methionine 608, tyrosine 631–methionine 634, tyrosine 663–methionine 666, and tyrosine 710–methionine 713. The interval threonine 801–arginine 821 is disordered. The span at serine 804–serine 817 shows a compositional bias: low complexity. The YXXM motif 9 motif lies at tyrosine 888–methionine 891.

Post-translationally, phosphorylated by INSR.

Its function is as follows. Potentiates insulin signaling. In Xenopus laevis (African clawed frog), this protein is Insulin receptor substrate 2-A (irs2-a).